The following is an 88-amino-acid chain: Large ribosomal subunit protein bL27 (88 aa).

The disordered stretch occupies residues 1–25 (MAHKKGASSSSNGRDSEAKRLGVKR).

It belongs to the bacterial ribosomal protein bL27 family.

In Corynebacterium diphtheriae (strain ATCC 700971 / NCTC 13129 / Biotype gravis), this protein is Large ribosomal subunit protein bL27.